The sequence spans 105 residues: Small ribosomal subunit protein uS10c (105 aa).

The protein belongs to the universal ribosomal protein uS10 family. In terms of assembly, part of the 30S ribosomal subunit.

The protein localises to the plastid. It is found in the chloroplast. Its function is as follows. Involved in the binding of tRNA to the ribosomes. This Gracilaria tenuistipitata var. liui (Red alga) protein is Small ribosomal subunit protein uS10c.